We begin with the raw amino-acid sequence, 208 residues long: Small ribosomal subunit protein eS1 (208 aa).

It belongs to the eukaryotic ribosomal protein eS1 family.

The chain is Small ribosomal subunit protein eS1 from Saccharolobus islandicus (strain Y.N.15.51 / Yellowstone #2) (Sulfolobus islandicus).